A 313-amino-acid polypeptide reads, in one-letter code: MMENYKHTTVLLDEAVNGLNIRPDGIYIDGTFGRGGHSRLILSQLGEEGRLLAIDRDPQAIAVAKTIDDPRFSIIHGPFSALGEYVAERDLIGKIDGILLDLGVSSPQLDDAERGFSFMRDGPLDMRMDPTRGQSAAEWLQTAEEADIAWVLKTYGEEHFAKRIARAIVERNREQPMTRTKELAEVVAAATPVKDKFKHPATRTFQAVRIWVNSELEEIEQALKSSLNVLAPGGRLSIISFHSLEDRIVKRFMRENSRGPQVPAGLPMTEEQLKKLGGRQLRALGKLMPGEEEVAENPRARSSVLRIAERTNA.

Residues 35–37, D55, F79, D101, and Q108 contribute to the S-adenosyl-L-methionine site; that span reads GGH.

This sequence belongs to the methyltransferase superfamily. RsmH family.

It localises to the cytoplasm. The catalysed reaction is cytidine(1402) in 16S rRNA + S-adenosyl-L-methionine = N(4)-methylcytidine(1402) in 16S rRNA + S-adenosyl-L-homocysteine + H(+). Functionally, specifically methylates the N4 position of cytidine in position 1402 (C1402) of 16S rRNA. The protein is Ribosomal RNA small subunit methyltransferase H of Shigella flexneri.